The primary structure comprises 214 residues: CASP-like protein UU5 (214 aa).

The interval 1–20 (MSTVAQDSAPGGGKIQDAME) is disordered. Residues 1–57 (MSTVAQDSAPGGGKIQDAMEQGAPGASSAAVVPEGGHYTQTPSPAFQAVKKNINHMS) lie on the Cytoplasmic side of the membrane. Residues 58–78 (AFSLGLRVAEFVLSVIAFSLM) traverse the membrane as a helical segment. Topologically, residues 79-99 (ASADQNGAVYSTFTSYSFVLA) are extracellular. A helical membrane pass occupies residues 100 to 120 (VNVLVVFYTIGQIIMSVLLLV). Topologically, residues 121-138 (SGSTPKKIYLFITFGCDQ) are cytoplasmic. Residues 139–159 (LSAFLLMAAGAAGASVALIIN) form a helical membrane-spanning segment. Topologically, residues 160 to 193 (RGGVTDAYGNGCIDGKITSFCSHAQASVAFTFLS) are extracellular. The helical transmembrane segment at 194–214 (FFCMVISSLLGVYSLAPYLIL) threads the bilayer.

This sequence belongs to the Casparian strip membrane proteins (CASP) family. As to quaternary structure, homodimer and heterodimers.

Its subcellular location is the cell membrane. The chain is CASP-like protein UU5 from Physcomitrium patens (Spreading-leaved earth moss).